We begin with the raw amino-acid sequence, 422 residues long: Mitochondrial distribution and morphology protein 12 (422 aa).

Positions 1–386 (MSFDINWNQL…WPSWICIDMN (386 aa)) constitute an SMP-LTD domain. 2 disordered regions span residues 74-134 (GATN…HDLG) and 387-422 (DDGD…THEV). Composition is skewed to acidic residues over residues 109 to 130 (FDDD…EYDD) and 387 to 401 (DDGD…EDSN). The span at 405 to 422 (GDGKDNDGKHGDGPTHEV) shows a compositional bias: basic and acidic residues.

This sequence belongs to the MDM12 family. In terms of assembly, component of the ER-mitochondria encounter structure (ERMES) or MDM complex, composed of MMM1, MDM10, MDM12 and MDM34. An MMM1 homodimer associates with one molecule of MDM12 on each side in a pairwise head-to-tail manner, and the SMP-LTD domains of MMM1 and MDM12 generate a continuous hydrophobic tunnel for phospholipid trafficking.

The protein localises to the mitochondrion outer membrane. It localises to the endoplasmic reticulum membrane. In terms of biological role, component of the ERMES/MDM complex, which serves as a molecular tether to connect the endoplasmic reticulum (ER) and mitochondria. Components of this complex are involved in the control of mitochondrial shape and protein biogenesis, and function in nonvesicular lipid trafficking between the ER and mitochondria. MDM12 is required for the interaction of the ER-resident membrane protein MMM1 and the outer mitochondrial membrane-resident beta-barrel protein MDM10. The MDM12-MMM1 subcomplex functions in the major beta-barrel assembly pathway that is responsible for biogenesis of all mitochondrial outer membrane beta-barrel proteins, and acts in a late step after the SAM complex. The MDM10-MDM12-MMM1 subcomplex further acts in the TOM40-specific pathway after the action of the MDM12-MMM1 complex. Essential for establishing and maintaining the structure of mitochondria and maintenance of mtDNA nucleoids. The polypeptide is Mitochondrial distribution and morphology protein 12 (Candida dubliniensis (strain CD36 / ATCC MYA-646 / CBS 7987 / NCPF 3949 / NRRL Y-17841) (Yeast)).